A 430-amino-acid chain; its full sequence is Dihydrolipoyllysine-residue acetyltransferase component of pyruvate dehydrogenase complex (430 aa).

The region spanning 2-77 (AFEFRLPDIG…VVGDVIVKID (76 aa)) is the Lipoyl-binding domain. Lys-43 carries the post-translational modification N6-lipoyllysine. The tract at residues 80–122 (DAEDMQFKGHDDDSSSKEEPAKEEAPAEQAPVATQTEEVDENR) is disordered. Residues 84-104 (MQFKGHDDDSSSKEEPAKEEA) show a composition bias toward basic and acidic residues. Positions 125–162 (KAMPSVRKYAREKGVNIKAVSGSGKNGRITKEDVDAYL) constitute a Peripheral subunit-binding (PSBD) domain. A disordered region spans residues 164-200 (GGAPTASNESADSATNEEVAETPAAPAAVSLEGDFPE). The span at 177 to 192 (ATNEEVAETPAAPAAV) shows a compositional bias: low complexity. The active site involves His-401.

It belongs to the 2-oxoacid dehydrogenase family. In terms of assembly, forms a 24-polypeptide structural core with octahedral symmetry. Requires (R)-lipoate as cofactor.

The catalysed reaction is N(6)-[(R)-dihydrolipoyl]-L-lysyl-[protein] + acetyl-CoA = N(6)-[(R)-S(8)-acetyldihydrolipoyl]-L-lysyl-[protein] + CoA. Functionally, the pyruvate dehydrogenase complex catalyzes the overall conversion of pyruvate to acetyl-CoA and CO(2). It contains multiple copies of three enzymatic components: pyruvate dehydrogenase (E1), dihydrolipoamide acetyltransferase (E2) and lipoamide dehydrogenase (E3). The chain is Dihydrolipoyllysine-residue acetyltransferase component of pyruvate dehydrogenase complex (pdhC) from Staphylococcus aureus.